A 158-amino-acid polypeptide reads, in one-letter code: uncharacterized protein (158 aa).

The HTH asnC-type domain occupies 12–73 (LDEIDRAILR…LINPFKAGYE (62 aa)). The H-T-H motif DNA-binding region spans 31–50 (YSEISRRINVPESTVRARVN).

This is an uncharacterized protein from Pyrococcus horikoshii (strain ATCC 700860 / DSM 12428 / JCM 9974 / NBRC 100139 / OT-3).